The following is a 184-amino-acid chain: Chromobox protein homolog hpl-1 (184 aa).

Residues 1 to 13 (MSRQNPVRSTRGN) show a composition bias toward polar residues. Disordered stretches follow at residues 1-27 (MSRQ…QDAP) and 87-115 (AAKR…STSD). The Chromo domain occupies 37–95 (FVVEKVLNKRLTRGGSEYYIKWQGFPESECSWEPIENLQCDRMIQEYEKEAAKRTTRKR). The segment covering 99–115 (PQPSTSSSAELQPSTSD) has biased composition (polar residues).

As to quaternary structure, interacts with histone demethylase spr-5. Interacts with chromobox protein homolog hpl-2. Interacts with histone H3 tails methylated at 'Lys-9' (H3K9me3) and 'Lys-23'(H3K23me2). Interacts with histone H1 variant his-24 (when monomethylated at 'Lys-14'); the interaction is direct. May interact with the REST corepressor rcor-1, histone deacetylase hda-1, and the histone demethylase lsd-1.

It localises to the nucleus. Seems to be involved in transcriptional silencing in heterochromatin-like complexes. Involved in epigenetic repression. Probably does not act as global transcriptional repressor. Plays a role in linking epigenetic regulation with the innate immune response. Acting in concert with chromobox protein homolog hpl-2 and histone H1 protein his-24, involved in reproduction, somatic gonad development, male tail development and vulval cell fate decisions; perhaps as a result of modulating expression of Hox genes mab-5 and egl-5. Role in growth and somatic gonad development is antagonized by histone-lysine N-methyltransferase set-2/SET1. Required for larval development, acting redundantly with hpl-2. Plays a role in the formation of the vulva and in fertility, acting together with a CoREST-like complex, and hpl-2. This chain is Chromobox protein homolog hpl-1, found in Caenorhabditis elegans.